Reading from the N-terminus, the 580-residue chain is Glypican-3 (580 aa).

The N-terminal stretch at 1-24 (MAGTVRTACLVVAMLLSLDFPGQA) is a signal peptide. Gln-25 carries the pyrrolidone carboxylic acid modification. 7 disulfide bridges follow: Cys-35–Cys-72, Cys-65–Cys-262, Cys-73–Cys-265, Cys-197–Cys-349, Cys-252–Cys-285, Cys-274–Cys-422, and Cys-278–Cys-410. N-linked (GlcNAc...) asparagine glycans are attached at residues Asn-124 and Asn-241. Ser-352 is subject to Phosphoserine. The N-linked (GlcNAc...) asparagine glycan is linked to Asn-418. O-linked (Xyl...) (glycosaminoglycan) serine glycans are attached at residues Ser-495 and Ser-509. A lipid anchor (GPI-anchor amidated asparagine) is attached at Asn-554. A propeptide spans 555–580 (LGNVHSPLKLLTSMAISVVCFFFLVH) (removed in mature form).

Belongs to the glypican family. As to quaternary structure, heterodimer; disulfide-linked. Cleavage by a furin-like convertase results in production of alpha and beta chains which form a disulfide-linked heterodimer. Interacts with DPP4. Interacts with FGF2. Interacts with WNT5A. Also interacts with WNT3A and WNT7B. Interacts with hedgehog protein SHH; the heparan sulfate chains are not required for the interaction. Also interacts with hedgehog protein IHH. Interacts with CD81. Interacts with Wnt receptors FZD4, FZD7 and FZD8; the heparan sulfate chains are required for the interaction. O-glycosylated; contains heparan sulfate and/or chondroitin sulfate. In terms of processing, cleaved intracellularly by a furin-like convertase to generate 2 subunits, alpha and beta, which remain associated through disulfide bonds and are associated with the cell surface via the GPI-anchor. This processing is essential for its role in inhibition of hedgehog signaling. A second proteolytic event may result in cleavage of the protein on the cell surface, separating it from the GPI-anchor and leading to its shedding from the cell surface.

The protein localises to the cell membrane. Functionally, cell surface proteoglycan. Negatively regulates the hedgehog signaling pathway when attached via the GPI-anchor to the cell surface by competing with the hedgehog receptor PTC1 for binding to hedgehog proteins. Binding to the hedgehog protein SHH triggers internalization of the complex by endocytosis and its subsequent lysosomal degradation. Positively regulates the canonical Wnt signaling pathway by binding to the Wnt receptor Frizzled and stimulating the binding of the Frizzled receptor to Wnt ligands. Positively regulates the non-canonical Wnt signaling pathway. Binds to CD81 which decreases the availability of free CD81 for binding to the transcriptional repressor HHEX, resulting in nuclear translocation of HHEX and transcriptional repression. Inhibits the dipeptidyl peptidase activity of DPP4. Plays a role in limb patterning and skeletal development by controlling the cellular response to BMP4. Modulates the effects of growth factors BMP2, BMP7 and FGF7 on renal branching morphogenesis. Required for coronary vascular development. Plays a role in regulating cell movements during gastrulation. The protein is Glypican-3 (GPC3) of Pan troglodytes (Chimpanzee).